We begin with the raw amino-acid sequence, 181 residues long: Large ribosomal subunit protein uL5 (181 aa).

The protein belongs to the universal ribosomal protein uL5 family. Part of the 50S ribosomal subunit; part of the 5S rRNA/L5/L18/L25 subcomplex. Contacts the 5S rRNA and the P site tRNA. Forms a bridge to the 30S subunit in the 70S ribosome.

In terms of biological role, this is one of the proteins that bind and probably mediate the attachment of the 5S RNA into the large ribosomal subunit, where it forms part of the central protuberance. In the 70S ribosome it contacts protein S13 of the 30S subunit (bridge B1b), connecting the 2 subunits; this bridge is implicated in subunit movement. Contacts the P site tRNA; the 5S rRNA and some of its associated proteins might help stabilize positioning of ribosome-bound tRNAs. This chain is Large ribosomal subunit protein uL5, found in Campylobacter lari (strain RM2100 / D67 / ATCC BAA-1060).